The chain runs to 73 residues: MLAAAKYIGSGVAALGLIGAGIGVGIVFAALIQGVSRNPSLRGQLFTYAILGFALSEATGLFALMVSFLLLYS.

A run of 2 helical transmembrane segments spans residues 12-32 and 50-70; these read VAALGLIGAGIGVGIVFAALI and ILGFALSEATGLFALMVSFLL.

It belongs to the ATPase C chain family. As to quaternary structure, F-type ATPases have 2 components, CF(1) - the catalytic core - and CF(0) - the membrane proton channel. CF(1) has five subunits: alpha(3), beta(3), gamma(1), delta(1), epsilon(1). CF(0) has three main subunits: a, b and c.

The protein resides in the mitochondrion inner membrane. Mitochondrial membrane ATP synthase (F(1)F(0) ATP synthase or Complex V) produces ATP from ADP in the presence of a proton gradient across the membrane which is generated by electron transport complexes of the respiratory chain. F-type ATPases consist of two structural domains, F(1) - containing the extramembraneous catalytic core and F(0) - containing the membrane proton channel, linked together by a central stalk and a peripheral stalk. During catalysis, ATP synthesis in the catalytic domain of F(1) is coupled via a rotary mechanism of the central stalk subunits to proton translocation. Part of the complex F(0) domain. A homomeric c-ring of probably 10 subunits is part of the complex rotary element. In Mycosarcoma maydis (Corn smut fungus), this protein is ATP synthase subunit 9, mitochondrial (ATP9).